The following is a 404-amino-acid chain: Cysteine desulfurase IscS (404 aa).

Pyridoxal 5'-phosphate is bound by residues 75–76 (AT), asparagine 155, glutamine 183, and 203–205 (SGH). The residue at position 206 (lysine 206) is an N6-(pyridoxal phosphate)lysine. A pyridoxal 5'-phosphate-binding site is contributed by threonine 243. Cysteine 328 (cysteine persulfide intermediate) is an active-site residue. Cysteine 328 is a [2Fe-2S] cluster binding site.

This sequence belongs to the class-V pyridoxal-phosphate-dependent aminotransferase family. NifS/IscS subfamily. As to quaternary structure, homodimer. Forms a heterotetramer with IscU, interacts with other sulfur acceptors. The cofactor is pyridoxal 5'-phosphate.

Its subcellular location is the cytoplasm. The catalysed reaction is (sulfur carrier)-H + L-cysteine = (sulfur carrier)-SH + L-alanine. Its pathway is cofactor biosynthesis; iron-sulfur cluster biosynthesis. Its function is as follows. Master enzyme that delivers sulfur to a number of partners involved in Fe-S cluster assembly, tRNA modification or cofactor biosynthesis. Catalyzes the removal of elemental sulfur and selenium atoms from cysteine and selenocysteine to produce alanine. Functions as a sulfur delivery protein for Fe-S cluster synthesis onto IscU, an Fe-S scaffold assembly protein, as well as other S acceptor proteins. Also functions as a selenium delivery protein in the pathway for the biosynthesis of selenophosphate. The protein is Cysteine desulfurase IscS of Salmonella schwarzengrund (strain CVM19633).